Here is a 150-residue protein sequence, read N- to C-terminus: Globin-1 (150 aa).

The Globin domain maps to 11–150; it reads ALTAAEKATI…MICILLRSSY (140 aa). Positions 74 and 106 each coordinate heme b.

The protein belongs to the globin family. As to quaternary structure, monomer.

This Petromyzon marinus (Sea lamprey) protein is Globin-1.